A 158-amino-acid chain; its full sequence is NAD(P)H-quinone oxidoreductase subunit J, chloroplastic (158 aa).

The protein belongs to the complex I 30 kDa subunit family. As to quaternary structure, NDH is composed of at least 16 different subunits, 5 of which are encoded in the nucleus.

Its subcellular location is the plastid. It is found in the chloroplast thylakoid membrane. The catalysed reaction is a plastoquinone + NADH + (n+1) H(+)(in) = a plastoquinol + NAD(+) + n H(+)(out). It carries out the reaction a plastoquinone + NADPH + (n+1) H(+)(in) = a plastoquinol + NADP(+) + n H(+)(out). NDH shuttles electrons from NAD(P)H:plastoquinone, via FMN and iron-sulfur (Fe-S) centers, to quinones in the photosynthetic chain and possibly in a chloroplast respiratory chain. The immediate electron acceptor for the enzyme in this species is believed to be plastoquinone. Couples the redox reaction to proton translocation, and thus conserves the redox energy in a proton gradient. The protein is NAD(P)H-quinone oxidoreductase subunit J, chloroplastic of Citrus sinensis (Sweet orange).